The sequence spans 359 residues: sn-1 acyl-lipid omega-3 desaturase (ferredoxin) (359 aa).

The span at 1–15 (MQLDTISFNNPLNSE) shows a compositional bias: polar residues. The disordered stretch occupies residues 1–20 (MQLDTISFNNPLNSETSEDT). The next 2 helical transmembrane spans lie at 47–67 (LFYF…ASYL) and 70–90 (WLFF…LFVV). The short motif at 92–96 (HDCGH) is the Histidine box-1 element. The short motif at 128–132 (HRTHH) is the Histidine box-2 element. 2 consecutive transmembrane segments (helical) span residues 207-227 (VLLI…GWMW) and 228-248 (LLKY…LVTF). Residues 294–298 (HHIFL) carry the Histidine box-3 motif.

This sequence belongs to the fatty acid desaturase type 2 family. Fe(2+) serves as cofactor.

The protein resides in the membrane. It carries out the reaction a 1-[(9Z,12Z)-octadecdienoyl]-2-acyl-glycerolipid + 2 reduced [2Fe-2S]-[ferredoxin] + O2 + 2 H(+) = a 1-[(9Z,12Z,15Z)-octadectrienoyl]-2-acyl-glycerolipid + 2 oxidized [2Fe-2S]-[ferredoxin] + 2 H2O. The catalysed reaction is a 1-[(6Z,9Z,12Z)-octadectrienoyl]-2-acyl-glycerolipid + 2 reduced [2Fe-2S]-[ferredoxin] + O2 + 2 H(+) = a 1-[(6Z,9Z,12Z,15Z)-octadectetraenoyl]-2-acyl-glycerolipid + 2 oxidized [2Fe-2S]-[ferredoxin] + 2 H2O. It functions in the pathway lipid metabolism; polyunsaturated fatty acid biosynthesis. In terms of biological role, desaturase involved in fatty acid biosynthesis. Introduces a double bond at carbon 15 of linoleoyl and gamma-linolenoyl groups attached to the sn-1 position of the glycerol moiety of membrane glycerolipids. This Nostoc sp. (strain 36) protein is sn-1 acyl-lipid omega-3 desaturase (ferredoxin).